Reading from the N-terminus, the 468-residue chain is MPISDINAGSHILVFPYPAQGHMLTLLDLTHQLAIRNLTITILVTPKNLPTISPLLAAHPTTVSALLLPLPPHPAIPSGIENVKDLPNDAFKAMMVALGDLYNPLRDWFRNQPNPPVAIISDFFLGWTHHLAVELGIRRYTFSPSGALALSVIFSLWRYQPKRIDVENEKEAIKFPKIPNSPEYPWWQLSPIYRSYVEGDPDSEFIKDGFLADIASWGIVINSFTELEQVYVDHLKHELGHDQVFAVGPLLPPGDKTSGRGGSSSNDVLSWLDTCADRTVVYVCFGSQMVLTNGQMEVVALGLEKSRVKFVWSVKEPTVGHEAANYGRVPPGFEDRVSGRGLVIRGWVPQVAILSHDSVGVFLTHCGWNSVMEAVAAEVLMLTWPMSADQFSNATLLHELKVGIKVCEGSNIVPNSDELAELFSKSLSDETRLERKRVKEFAKSAKEAVGPKGSSVGELERLVDNLSL.

Residues Ser-287, 347–348, 365–373, and 387–390 each bind UDP-alpha-D-glucose; these read WV, HCGWNSVME, and SADQ.

The protein belongs to the UDP-glycosyltransferase family.

May glycosylate diterpenes or flavonols in leaves. This is UDP-glycosyltransferase 89B2 from Stevia rebaudiana (Stevia).